Consider the following 427-residue polypeptide: Inward rectifier potassium channel 2 (427 aa).

The Cytoplasmic segment spans residues 1 to 81 (MGSVRTNRYS…IFTTCVDIRW (81 aa)). Residues 82 to 106 (RWMLVIFCLTFILSWLFFGCVFWLI) traverse the membrane as a helical segment. Residues 107–128 (ALLHGDLENQENNKPCVSQVSS) lie on the Extracellular side of the membrane. The segment at residues 129-140 (FTAAFLFSIETQ) is an intramembrane region (helical; Pore-forming). Residues 141–147 (TTIGYGF) constitute an intramembrane region (pore-forming). Positions 142–147 (TIGYGF) match the Selectivity filter motif. Over 148–156 (RCVTDECPI) the chain is Extracellular. Residues 157–178 (AVFMVVFQSIVGCIIDAFIIGA) traverse the membrane as a helical segment. Residues 179 to 427 (VMAKMAKPKK…PRPLRRESEI (249 aa)) lie on the Cytoplasmic side of the membrane. The segment at 181-208 (AKMAKPKKRNETLVFSHNAVVAMRDGKL) is polyphosphoinositide (PIP2)-binding. The tract at residues 386–427 (EEDEIDTGVPESTSTDTHPDMDHHNQAGVPLEPRPLRRESEI) is disordered. The short motif at 425–427 (SEI) is the PDZ-binding element.

It belongs to the inward rectifier-type potassium channel (TC 1.A.2.1) family. KCNJ2 subfamily. In terms of assembly, homotetramer. Homomultimeric and heteromultimeric association with KCNJ4/Kir2.3, resulting in an enhanced G-protein-induced current. Associates, via its PDZ-recognition domain, with a complex containing LIN7A, LIN7B, LIN7C, DLG1, CASK and APBA1. As to expression, found in the apical basilar papilla of the inner ear, brain, muscle, cerebellum, heart and liver.

It is found in the cell membrane. It localises to the sarcolemma. The protein resides in the T-tubule. It catalyses the reaction K(+)(in) = K(+)(out). With respect to regulation, activated by phosphatidylinositol 4,5 biphosphate (PtdIns(4,5)P2). Functionally, inward rectifier potassium channels are characterized by a greater tendency to allow potassium to flow into the cell rather than out of it. Their voltage dependence is regulated by the concentration of extracellular potassium; as external potassium is raised, the voltage range of the channel opening shifts to more positive voltages. The inward rectification is mainly due to the blockage of outward current by internal magnesium. Can be blocked by external barium. Probably participates in establishing action potential waveform and excitability of neuronal and muscle tissues. This Gallus gallus (Chicken) protein is Inward rectifier potassium channel 2 (KCNJ2).